A 123-amino-acid chain; its full sequence is uncharacterized protein (123 aa).

Over residues 1–12 (MALNNVSLSSGD) the composition is skewed to polar residues. Disordered regions lie at residues 1–25 (MALN…SHGD) and 53–91 (PRQA…RFSP). Residues 61–82 (VRAESRRVDGGGRSPREPDGRG) are compositionally biased toward basic and acidic residues.

This is an uncharacterized protein from Homo sapiens (Human).